Reading from the N-terminus, the 114-residue chain is Kita-kyushu lung cancer antigen 1 homolog (114 aa).

Over 1–4 (MNVY) the chain is Cytoplasmic. The helical; Signal-anchor for type II membrane protein transmembrane segment at 5 to 22 (LLLASGILCALMTVFWKY) threads the bilayer. Residues 23–114 (RRFQRNTGEM…RSASAHRKST (92 aa)) are Extracellular-facing. Asparagine 84 carries N-linked (GlcNAc...) asparagine glycosylation.

The protein localises to the cell membrane. This is Kita-kyushu lung cancer antigen 1 homolog (CT83) from Macaca fascicularis (Crab-eating macaque).